Reading from the N-terminus, the 677-residue chain is Beta-galactosidase (677 aa).

The N-terminal stretch at 1 to 23 is a signal peptide; it reads MPGFLVRILPLLLVLLLLGPTRG. Residues 24-28 constitute a propeptide that is removed on maturation; it reads LRNAT. N-linked (GlcNAc...) asparagine glycosylation occurs at asparagine 26. Residues tyrosine 83, glutamate 129, and asparagine 187 each coordinate substrate. Glutamate 188 functions as the Proton donor in the catalytic mechanism. An intrachain disulfide couples cysteine 195 to cysteine 230. A glycan (N-linked (GlcNAc...) asparagine) is linked at asparagine 247. Glutamate 268 serves as the catalytic Nucleophile. Tyrosine 333 is a substrate binding site. N-linked (GlcNAc...) asparagine glycosylation is found at asparagine 464, asparagine 498, asparagine 542, asparagine 545, and asparagine 555. An intrachain disulfide couples cysteine 626 to cysteine 634. The tract at residues 650–677 is disordered; the sequence is YDHPSKPVEKRLMPPPPQKNKDSWLDHV. 2 stretches are compositionally biased toward basic and acidic residues: residues 652–661 and 668–677; these read HPSKPVEKRL and KNKDSWLDHV.

Belongs to the glycosyl hydrolase 35 family. As to quaternary structure, homodimer. May form higher multimers. As to expression, detected in placenta (at protein level). Detected in fibroblasts and testis.

The protein localises to the lysosome. Its subcellular location is the cytoplasm. It is found in the perinuclear region. The catalysed reaction is Hydrolysis of terminal non-reducing beta-D-galactose residues in beta-D-galactosides.. Functionally, cleaves beta-linked terminal galactosyl residues from gangliosides, glycoproteins, and glycosaminoglycans. Has no beta-galactosidase catalytic activity, but plays functional roles in the formation of extracellular elastic fibers (elastogenesis) and in the development of connective tissue. Seems to be identical to the elastin-binding protein (EBP), a major component of the non-integrin cell surface receptor expressed on fibroblasts, smooth muscle cells, chondroblasts, leukocytes, and certain cancer cell types. In elastin producing cells, associates with tropoelastin intracellularly and functions as a recycling molecular chaperone which facilitates the secretions of tropoelastin and its assembly into elastic fibers. This Homo sapiens (Human) protein is Beta-galactosidase (GLB1).